A 307-amino-acid chain; its full sequence is Ribonuclease Z (307 aa).

Zn(2+) contacts are provided by histidine 61, histidine 63, aspartate 65, histidine 66, histidine 138, aspartate 207, and histidine 265. The Proton acceptor role is filled by aspartate 65.

Belongs to the RNase Z family. As to quaternary structure, homodimer. Zn(2+) is required as a cofactor.

The enzyme catalyses Endonucleolytic cleavage of RNA, removing extra 3' nucleotides from tRNA precursor, generating 3' termini of tRNAs. A 3'-hydroxy group is left at the tRNA terminus and a 5'-phosphoryl group is left at the trailer molecule.. Functionally, zinc phosphodiesterase, which displays some tRNA 3'-processing endonuclease activity. Probably involved in tRNA maturation, by removing a 3'-trailer from precursor tRNA. The polypeptide is Ribonuclease Z (Methanothermobacter thermautotrophicus (strain ATCC 29096 / DSM 1053 / JCM 10044 / NBRC 100330 / Delta H) (Methanobacterium thermoautotrophicum)).